Reading from the N-terminus, the 115-residue chain is Ribonuclease P protein component (115 aa).

The protein belongs to the RnpA family. Consists of a catalytic RNA component (M1 or rnpB) and a protein subunit.

The enzyme catalyses Endonucleolytic cleavage of RNA, removing 5'-extranucleotides from tRNA precursor.. In terms of biological role, RNaseP catalyzes the removal of the 5'-leader sequence from pre-tRNA to produce the mature 5'-terminus. It can also cleave other RNA substrates such as 4.5S RNA. The protein component plays an auxiliary but essential role in vivo by binding to the 5'-leader sequence and broadening the substrate specificity of the ribozyme. This is Ribonuclease P protein component from Bacillus cereus (strain G9842).